Reading from the N-terminus, the 596-residue chain is Aspartate--tRNA(Asp/Asn) ligase (596 aa).

Glu-175 is an L-aspartate binding site. Residues 199 to 202 (QQYK) are aspartate. L-aspartate is bound by residues Arg-221 and His-454. 221 to 223 (RDE) is an ATP binding site. Glu-488 serves as a coordination point for ATP. Arg-495 contributes to the L-aspartate binding site. Residue 540 to 543 (GVDR) participates in ATP binding.

This sequence belongs to the class-II aminoacyl-tRNA synthetase family. Type 1 subfamily. As to quaternary structure, homodimer.

It is found in the cytoplasm. It carries out the reaction tRNA(Asx) + L-aspartate + ATP = L-aspartyl-tRNA(Asx) + AMP + diphosphate. Functionally, aspartyl-tRNA synthetase with relaxed tRNA specificity since it is able to aspartylate not only its cognate tRNA(Asp) but also tRNA(Asn). Reaction proceeds in two steps: L-aspartate is first activated by ATP to form Asp-AMP and then transferred to the acceptor end of tRNA(Asp/Asn). The polypeptide is Aspartate--tRNA(Asp/Asn) ligase (Bartonella henselae (strain ATCC 49882 / DSM 28221 / CCUG 30454 / Houston 1) (Rochalimaea henselae)).